The following is an 85-amino-acid chain: Cysteine-rich venom protein 1 (85 aa).

The first 21 residues, methionine 1–alanine 21, serve as a signal peptide directing secretion. 5 disulfide bridges follow: cysteine 29/cysteine 63, cysteine 38/cysteine 59, cysteine 42/cysteine 53, cysteine 46/cysteine 84, and cysteine 65/cysteine 78. The TIL domain maps to cysteine 29–cysteine 84.

The protein belongs to the serine protease inhibitor-like (TIL domain-containing) family. Expressed by the venom gland.

Its subcellular location is the secreted. Its function is as follows. May be a phenoloxidase inhibitor that stabilizes or inhibits venom phenoloxidase while it is stored in the venom sac. This chain is Cysteine-rich venom protein 1, found in Pimpla hypochondriaca (Parasitoid wasp).